Here is a 392-residue protein sequence, read N- to C-terminus: MRPTPLFFALLQIALAAKRADQICNDHCSNAYQKQQSCGGTDDVSSQSATLKCLCADESYWSELASCDCSSYDSNVSAQDLRAYYCNVGVTGGSQGQSTSGDANAATNSNDATGTATDAAAATNGNDGASGTADANNANNTDGSGATDASNTNNNGSTDTVNTNTAGSGSSETTAAAGAAAGTAAGTNSASDQANETGSDATNAATGSDASGTAATNTASTASGATSGSGSDAAKKTGTNTDSDSDTATKGSDATAGSMTTAASGLGATNGTSNSTGSHSGSMTSITTGSGFTNGTSSRSGSGSGSSTRSGSNSDSSSSGSGSRSSSSADSSDSDSGSGSSSTESGSGSGSGSSTSSGSGSGSGSSTRSGGFAATIPTVTFGSLVALALNLL.

Residues 1-16 (MRPTPLFFALLQIALA) form the signal peptide. N-linked (GlcNAc...) asparagine glycosylation is found at Asn75, Asn139, and Asn155. Residues 95 to 375 (QGQSTSGDAN…STRSGGFAAT (281 aa)) form a disordered region. Residues 96–147 (GQSTSGDANAATNSNDATGTATDAAAATNGNDGASGTADANNANNTDGSGAT) are compositionally biased toward low complexity. The span at 148–161 (DASNTNNNGSTDTV) shows a compositional bias: polar residues. The segment covering 162 to 191 (NTNTAGSGSSETTAAAGAAAGTAAGTNSAS) has biased composition (low complexity). An N-linked (GlcNAc...) asparagine glycan is attached at Asn195. Residues 199–232 (SDATNAATGSDASGTAATNTASTASGATSGSGSD) are compositionally biased toward low complexity. Residues 237-250 (TGTNTDSDSDTATK) show a composition bias toward polar residues. Residues 251–371 (GSDATAGSMT…GSGSSTRSGG (121 aa)) are compositionally biased toward low complexity. N-linked (GlcNAc...) asparagine glycosylation is found at Asn270, Asn274, and Asn294. Residue Ser363 is the site of GPI-anchor amidated serine attachment. Residues 364–392 (GSSTRSGGFAATIPTVTFGSLVALALNLL) constitute a propeptide, removed in mature form.

Belongs to the IHD1 family. Post-translationally, the GPI-anchor is attached to the protein in the endoplasmic reticulum and serves to target the protein to the cell surface. There, the glucosamine-inositol phospholipid moiety is cleaved off and the GPI-modified mannoprotein is covalently attached via its lipidless GPI glycan remnant to the 1,6-beta-glucan of the outer cell wall layer.

Its subcellular location is the secreted. The protein localises to the cell wall. It is found in the membrane. GPI-anchored cell wall protein that may be involved in cell wall organization, hyphal growth, as well as in virulence. The chain is Induced during hyphae development protein 1 (IHD1) from Candida albicans (strain SC5314 / ATCC MYA-2876) (Yeast).